The chain runs to 822 residues: Microcephalin (822 aa).

The 90-residue stretch at 10–99 folds into the BRCT 1 domain; sequence AFLKDVVAYV…ALVDESLFPA (90 aa). Disordered stretches follow at residues 182–203, 219–243, and 266–295; these read MKEKRENLSPTSSQMLEQSQQN, PLSSDESFASGSHSSFGDSCGDQER, and SSFYGSASPNHLRQPRPQKAPDSPSKESIN. Composition is skewed to polar residues over residues 189–203 and 219–235; these read LSPTSSQMLEQSQQN and PLSSDESFASGSHSSFG. A phosphoserine mark is found at Ser-273, Ser-290, and Ser-327. Thr-329 bears the Phosphothreonine mark. Disordered stretches follow at residues 335–366, 498–567, and 594–636; these read EHQVRLGPKNSSAKRKRAADLGSSPKGKLKKR, NDSP…SPED, and TGYS…PTRT. The span at 522-541 shows a compositional bias: polar residues; the sequence is HPDTLSSSAHHITPLKGNST. Composition is skewed to basic and acidic residues over residues 542 to 553 and 625 to 634; these read ETRDPGDGKGSP and KKSEKEEKPT. BRCT domains lie at 627–717 and 738–820; these read SEKE…PFEL and YQGT…NYQL.

Interacts with CDC27 and maybe other components of the APC/C complex. Interacts with histone variant H2AX under DNA damage conditions. High levels of expression are found in the developing forebrain and, in particular, in the walls of the lateral ventricles.

It is found in the cytoplasm. The protein resides in the cytoskeleton. Its subcellular location is the microtubule organizing center. It localises to the centrosome. Implicated in chromosome condensation and DNA damage induced cellular responses. May play a role in neurogenesis and regulation of the size of the cerebral cortex. The chain is Microcephalin from Mus musculus (Mouse).